The primary structure comprises 262 residues: Probable carboxylesterase SOBER1-like (262 aa).

Residues Ser151, Asp205, and His237 each act as charge relay system in the active site.

It belongs to the AB hydrolase superfamily. AB hydrolase 2 family.

Its function is as follows. Carboxylesterase. In Arabidopsis thaliana (Mouse-ear cress), this protein is Probable carboxylesterase SOBER1-like.